The following is a 1738-amino-acid chain: Complement C4-B (1738 aa).

A signal peptide spans 1–19 (MRLLWGLAWVFSFCASSLQ). Cysteines 66 and 95 form a disulfide. Asparagine 224 carries N-linked (GlcNAc...) asparagine glycosylation. A disulfide bridge connects residues cysteine 633 and cysteine 667. Positions 674 to 677 (RQKR) are excised as a propeptide. 3 disulfides stabilise this stretch: cysteine 700-cysteine 726, cysteine 701-cysteine 733, and cysteine 714-cysteine 734. The region spanning 700-734 (CCQDGMTKLPMKRTCEQRAARVPQQACREPFLSCC) is the Anaphylatoxin-like domain. N-linked (GlcNAc...) asparagine glycosylation occurs at asparagine 743. The segment at residues 1006-1009 (CAEQ) is a cross-link (isoglutamyl cysteine thioester (Cys-Gln)). Residues asparagine 1324 and asparagine 1387 are each glycosylated (N-linked (GlcNAc...) asparagine). Tyrosine 1413, tyrosine 1416, and tyrosine 1417 each carry sulfotyrosine. A propeptide spanning residues 1444 to 1447 (RRRR) is cleaved from the precursor. Disulfide bonds link cysteine 1465–cysteine 1529, cysteine 1577–cysteine 1582, cysteine 1589–cysteine 1667, cysteine 1612–cysteine 1736, and cysteine 1712–cysteine 1721. The NTR domain maps to 1589-1736 (CPRLLRSLER…FLMEFSSRGC (148 aa)).

In terms of assembly, in absence of complement activation, circulates in blood as a disulfide-linked trimer of an alpha, beta and gamma chain. Complement C4b is composed of complement C4b-A, complement C4 beta and complement C4 gamma chains that are associated via disulfide bonds. Non-enzymatic component of the C3 convertase, also named C4bC2b, composed of the serine protease complement C2b (C2), as well as complement C4b. Non-enzymatic component of the C5 convertase, also named C4bC2bC3b, composed of the serine protease complement C2b (C2), complement C3b, as well as complement C4b. In terms of processing, prior to secretion, the single-chain precursor is enzymatically cleaved by plasminogen (PLG) to yield non-identical chains alpha, beta and gamma. During activation of the complement systems, the alpha chain is cleaved into C4a and C4b by different proteases depending on the complement pathway: C4b stays linked to the beta and gamma chains, while C4a is released in the plasma. The alpha chain is cleaved by C1S to generate C4a and C4b following activation by the classical complement system. The alpha chain is cleaved to generate C4a and C4b by MASP2 following activation by the lectin complement system. The alpha chain is cleaved by GZMK to generate C4a and C4b following activation by the GZMK complement system. Further degradation of C4b by C1 into the inactive fragments C4c and C4d blocks the generation of C3 convertase. The proteolytic cleavages often are incomplete so that many structural forms can be found in plasma. Upon activation, the internal thioester bond reacts with carbohydrate antigens on the target surface to form amide or ester bonds, leading to covalent association with the surface of pathogens. Post-translationally, complement C4b interacts with complement C3b via a thioester linkage.

The protein resides in the secreted. It is found in the cell surface. Functionally, precursor of non-enzymatic components of the classical, lectin and GZMK complement pathways, which consist in a cascade of proteins that leads to phagocytosis and breakdown of pathogens and signaling that strengthens the adaptive immune system. In terms of biological role, non-enzymatic component of C3 and C5 convertases. Generated following cleavage by complement proteases (C1S, MASP2 or GZMK, depending on the complement pathway), it covalently attaches to the surface of pathogens, where it acts as an opsonin that marks the surface of antigens for removal. It then recruits the serine protease complement C2b to form the C3 and C5 convertases, which cleave and activate C3 and C5, respectively, the next components of the complement pathways. Complement C4b-A isotype is responsible for effective binding to form amide bonds with immune aggregates or protein antigens, while complement C4b-B isotype catalyzes the transacylation of the thioester carbonyl group to form ester bonds with carbohydrate antigens. Putative humoral mediator released following cleavage by complement proteases (C1S, MASP2 or GZMK, depending on the complement pathway). While it is strongly similar to anaphylatoxins, its role is unclear. Was reported to act as a mediator of local inflammatory process; however these effects were probably due to contamination with C3a and/C5a anaphylatoxins in biological assays. The chain is Complement C4-B from Mus musculus (Mouse).